Here is an 862-residue protein sequence, read N- to C-terminus: DNA mismatch repair protein MutS (862 aa).

ATP is bound at residue 621 to 628 (GPNMGGKS).

It belongs to the DNA mismatch repair MutS family.

Its function is as follows. This protein is involved in the repair of mismatches in DNA. It is possible that it carries out the mismatch recognition step. This protein has a weak ATPase activity. The polypeptide is DNA mismatch repair protein MutS (Vibrio cholerae serotype O1 (strain ATCC 39541 / Classical Ogawa 395 / O395)).